Reading from the N-terminus, the 185-residue chain is C-type lectin domain family 5 member A (185 aa).

At 1–4 (MNWH) the chain is on the cytoplasmic side. Residues 5-27 (MIISGLIVVVLKIVGMTFFLLYF) form a helical; Signal-anchor for type II membrane protein membrane-spanning segment. At 28–185 (PQIFGEHNVS…YRSICEKSAQ (158 aa)) the chain is on the extracellular side. N-linked (GlcNAc...) asparagine glycans are attached at residues Asn35 and Asn55. A disulfide bridge connects residues Cys68 and Cys79. Residues 75 to 181 (HQGRCFFLST…CDVNYRSICE (107 aa)) form the C-type lectin domain. N-linked (GlcNAc...) asparagine glycans are attached at residues Asn90, Asn117, Asn141, and Asn146. 2 disulfide bridges follow: Cys96–Cys180 and Cys158–Cys172.

As to quaternary structure, monomer. Homodimer. The majority of CLEC5A is expressed as a monomeric form on macrophages. Interacts with TYROBP/DAP12. The interaction with TYROBP is required for CLEC5 cell surface expression. Interacts with HCST/DAP10. Forms a CLEC5A/TYROBP/HCST trimolecular complex depending almost solely on TYROBP. N-glycosylated. Contains sialic acid residues. As to expression, constitutively expressed in monocytes and macrophages.

It localises to the cell membrane. Functions as a positive regulator of osteoclastogenesis. Cell surface receptor that signals via TYROBP. Regulates inflammatory responses. This Sus scrofa (Pig) protein is C-type lectin domain family 5 member A (CLEC5A).